The chain runs to 163 residues: 3-hydroxyacyl-[acyl-carrier-protein] dehydratase FabZ (163 aa).

Residue H58 is part of the active site.

The protein belongs to the thioester dehydratase family. FabZ subfamily.

The protein resides in the cytoplasm. It catalyses the reaction a (3R)-hydroxyacyl-[ACP] = a (2E)-enoyl-[ACP] + H2O. In terms of biological role, involved in unsaturated fatty acids biosynthesis. Catalyzes the dehydration of short chain beta-hydroxyacyl-ACPs and long chain saturated and unsaturated beta-hydroxyacyl-ACPs. The protein is 3-hydroxyacyl-[acyl-carrier-protein] dehydratase FabZ of Francisella philomiragia subsp. philomiragia (strain ATCC 25017 / CCUG 19701 / FSC 153 / O#319-036).